A 435-amino-acid polypeptide reads, in one-letter code: Transcription activator ACTTR (435 aa).

Residues 16–43 constitute a DNA-binding region (zn(2)-C6 fungal-type); that stretch reads CDFCTQSKLRCNKNKPSCRRCTIQQQPC. Positions 48–89 are disordered; the sequence is ARRTGRPPKRPRKANDGQEANEQHGDQDPVTSTPGGSCQQQS. The span at 50 to 59 shows a compositional bias: basic residues; sequence RTGRPPKRPR. The span at 60–74 shows a compositional bias: basic and acidic residues; the sequence is KANDGQEANEQHGDQ. The span at 76-89 shows a compositional bias: polar residues; the sequence is PVTSTPGGSCQQQS.

Its subcellular location is the nucleus. Transcription factor that regulates the expression of the gene clusters that mediate the biosynthesis of the host-selective toxins (HSTs) ACT-toxins responsible for brown spot of tangerine disease by the tangerine pathotype which affects tangerines and mandarins. ACT-toxins consist of three moieties, 9,10-epoxy-8-hydroxy-9-methyl-decatrienoic acid (EDA), valine and a polyketide. ACT-toxin I is toxic to both citrus and pear; toxin II the 5''-deoxy derivative of ACT-toxin I, is highly toxic to pear and slightly toxic to citrus. On cellular level, ACT-toxins affect plasma membrane of susceptible cells and cause a sudden increase in loss of K(+) after a few minutes of toxin treatment. In Alternaria alternata (Alternaria rot fungus), this protein is Transcription activator ACTTR.